Reading from the N-terminus, the 154-residue chain is Ribosome maturation factor RimP (154 aa).

It belongs to the RimP family.

It is found in the cytoplasm. Its function is as follows. Required for maturation of 30S ribosomal subunits. The sequence is that of Ribosome maturation factor RimP from Clostridium perfringens (strain ATCC 13124 / DSM 756 / JCM 1290 / NCIMB 6125 / NCTC 8237 / Type A).